The sequence spans 298 residues: Probable 2-(5''-triphosphoribosyl)-3'-dephosphocoenzyme-A synthase 2 (298 aa).

The protein belongs to the CitG/MdcB family.

The catalysed reaction is 3'-dephospho-CoA + ATP = 2'-(5''-triphospho-alpha-D-ribosyl)-3'-dephospho-CoA + adenine. This is Probable 2-(5''-triphosphoribosyl)-3'-dephosphocoenzyme-A synthase 2 from Salmonella typhi.